The primary structure comprises 863 residues: Cilia- and flagella-associated protein 58 (863 aa).

Coiled-coil stretches lie at residues 107–600 and 631–815; these read TVKE…NERD and QSQY…KQVF. Positions 836 to 863 are disordered; sequence GPSLLDQLPGGSGTGSGGMATGGGVGMS. Over residues 845 to 863 the composition is skewed to gly residues; sequence GGSGTGSGGMATGGGVGMS.

Belongs to the CFAP58 family.

The protein resides in the cell projection. It localises to the cilium. Its subcellular location is the flagellum. The polypeptide is Cilia- and flagella-associated protein 58 (Chlamydomonas reinhardtii (Chlamydomonas smithii)).